The primary structure comprises 66 residues: DNA-directed RNA polymerase subunit Rpo10 (66 aa).

Cys7, Cys10, Cys44, and Cys45 together coordinate Zn(2+).

This sequence belongs to the archaeal Rpo10/eukaryotic RPB10 RNA polymerase subunit family. In terms of assembly, part of the RNA polymerase complex. Zn(2+) is required as a cofactor.

It is found in the cytoplasm. The catalysed reaction is RNA(n) + a ribonucleoside 5'-triphosphate = RNA(n+1) + diphosphate. Its function is as follows. DNA-dependent RNA polymerase (RNAP) catalyzes the transcription of DNA into RNA using the four ribonucleoside triphosphates as substrates. The polypeptide is DNA-directed RNA polymerase subunit Rpo10 (Staphylothermus marinus (strain ATCC 43588 / DSM 3639 / JCM 9404 / F1)).